The sequence spans 27 residues: Ganodermin (27 aa).

In terms of biological role, has antifungal activity against B.cinera, F.oxysporum and P.piricola with IC(50) values of 15.2 uM, 12.4 uM and 18.1 uM, respectively. Lacks hemagglutinating activity towards rabbit erythrocytes. Lacks deoxyribonuclease, ribonuclease and protease inhibitory activities. The sequence is that of Ganodermin from Ganoderma lucidum (Ling zhi medicinal fungus).